A 374-amino-acid chain; its full sequence is Chaperone protein DnaJ (374 aa).

One can recognise a J domain in the interval 5–70 (DYYEILGVSR…QKRAAYDQYG (66 aa)). The CR-type zinc finger occupies 129 to 207 (GVTREIRIPT…CHGHGRVEKS (79 aa)). Residues C142, C145, C159, C162, C181, C184, C195, and C198 each coordinate Zn(2+). CXXCXGXG motif repeat units follow at residues 142-149 (CDVCHGSG), 159-166 (CPTCHGQG), 181-188 (CPTCQGQG), and 195-202 (CTKCHGHG).

The protein belongs to the DnaJ family. As to quaternary structure, homodimer. Zn(2+) is required as a cofactor.

Its subcellular location is the cytoplasm. Functionally, participates actively in the response to hyperosmotic and heat shock by preventing the aggregation of stress-denatured proteins and by disaggregating proteins, also in an autonomous, DnaK-independent fashion. Unfolded proteins bind initially to DnaJ; upon interaction with the DnaJ-bound protein, DnaK hydrolyzes its bound ATP, resulting in the formation of a stable complex. GrpE releases ADP from DnaK; ATP binding to DnaK triggers the release of the substrate protein, thus completing the reaction cycle. Several rounds of ATP-dependent interactions between DnaJ, DnaK and GrpE are required for fully efficient folding. Also involved, together with DnaK and GrpE, in the DNA replication of plasmids through activation of initiation proteins. The chain is Chaperone protein DnaJ from Sodalis glossinidius (strain morsitans).